The chain runs to 191 residues: MLSHLRPAITMTVLFTGLCGLAYPLAITGVAQAVLPAQANGSIVTKGDAVVGSALIGQAFTSPRYFASRPSATSNSPYNPLASGGTNLGATSQKLKDQIAAAVTAWQANGRSGPVPADAVTSSASGLDPDISPENARQQVALVAKARNMPEKDVAALVEAQVQPRLLGVIGEPRVNVLRLNMALDAAGATQ.

A helical membrane pass occupies residues 13–35; that stretch reads VLFTGLCGLAYPLAITGVAQAVL. Positions 112–132 are disordered; sequence SGPVPADAVTSSASGLDPDIS.

The protein belongs to the KdpC family. In terms of assembly, the system is composed of three essential subunits: KdpA, KdpB and KdpC.

The protein localises to the cell inner membrane. Functionally, part of the high-affinity ATP-driven potassium transport (or Kdp) system, which catalyzes the hydrolysis of ATP coupled with the electrogenic transport of potassium into the cytoplasm. This subunit acts as a catalytic chaperone that increases the ATP-binding affinity of the ATP-hydrolyzing subunit KdpB by the formation of a transient KdpB/KdpC/ATP ternary complex. The polypeptide is Potassium-transporting ATPase KdpC subunit (Allorhizobium ampelinum (strain ATCC BAA-846 / DSM 112012 / S4) (Agrobacterium vitis (strain S4))).